Reading from the N-terminus, the 313-residue chain is Pseudouridine-5'-phosphate glycosidase (313 aa).

Glu26 functions as the Proton donor in the catalytic mechanism. Substrate contacts are provided by Lys87 and Ala107. Asp139 provides a ligand contact to Mn(2+). 141–143 (SAD) is a binding site for substrate. The Nucleophile role is filled by Lys160.

The protein belongs to the pseudouridine-5'-phosphate glycosidase family. As to quaternary structure, homotrimer. The cofactor is Mn(2+).

It catalyses the reaction D-ribose 5-phosphate + uracil = psi-UMP + H2O. Catalyzes the reversible cleavage of pseudouridine 5'-phosphate (PsiMP) to ribose 5-phosphate and uracil. Functions biologically in the cleavage direction, as part of a pseudouridine degradation pathway. The chain is Pseudouridine-5'-phosphate glycosidase from Corynebacterium aurimucosum (strain ATCC 700975 / DSM 44827 / CIP 107346 / CN-1) (Corynebacterium nigricans).